Here is a 426-residue protein sequence, read N- to C-terminus: Amino acid transporter AVT1H (426 aa).

11 helical membrane passes run 34-54 (SFLH…QLSM), 55-75 (PYAV…FGIL), 110-130 (LIVC…YTIS), 148-168 (HFPA…SLWI), 182-202 (ILMS…GGVI), 215-235 (IPTV…FPNL), 248-268 (VSIV…ITGA), 292-312 (IALW…FAPL), 340-360 (LLLV…VLSL), 363-383 (SLVS…KICW), and 392-412 (AANL…SFES).

The protein belongs to the amino acid/polyamine transporter 2 family. Amino acid/auxin permease (AAAP) (TC 2.A.18.5) subfamily.

It is found in the membrane. In Arabidopsis thaliana (Mouse-ear cress), this protein is Amino acid transporter AVT1H.